The chain runs to 482 residues: tRNA sulfurtransferase (482 aa).

In terms of domain architecture, THUMP spans 61–165 (LAIRDALTRI…DDRLLLIKGR (105 aa)). ATP is bound by residues 183 to 184 (LI), K265, G287, and Q296. The cysteines at positions 344 and 456 are disulfide-linked. The Rhodanese domain maps to 404–482 (FGPNDVILDI…GFNNVKVYRP (79 aa)). The Cysteine persulfide intermediate role is filled by C456.

Belongs to the ThiI family.

Its subcellular location is the cytoplasm. The enzyme catalyses [ThiI sulfur-carrier protein]-S-sulfanyl-L-cysteine + a uridine in tRNA + 2 reduced [2Fe-2S]-[ferredoxin] + ATP + H(+) = [ThiI sulfur-carrier protein]-L-cysteine + a 4-thiouridine in tRNA + 2 oxidized [2Fe-2S]-[ferredoxin] + AMP + diphosphate. It carries out the reaction [ThiS sulfur-carrier protein]-C-terminal Gly-Gly-AMP + S-sulfanyl-L-cysteinyl-[cysteine desulfurase] + AH2 = [ThiS sulfur-carrier protein]-C-terminal-Gly-aminoethanethioate + L-cysteinyl-[cysteine desulfurase] + A + AMP + 2 H(+). The protein operates within cofactor biosynthesis; thiamine diphosphate biosynthesis. Functionally, catalyzes the ATP-dependent transfer of a sulfur to tRNA to produce 4-thiouridine in position 8 of tRNAs, which functions as a near-UV photosensor. Also catalyzes the transfer of sulfur to the sulfur carrier protein ThiS, forming ThiS-thiocarboxylate. This is a step in the synthesis of thiazole, in the thiamine biosynthesis pathway. The sulfur is donated as persulfide by IscS. In Shigella sonnei (strain Ss046), this protein is tRNA sulfurtransferase.